Consider the following 132-residue polypeptide: Small ribosomal subunit protein uS8c (132 aa).

It belongs to the universal ribosomal protein uS8 family. As to quaternary structure, part of the 30S ribosomal subunit.

It localises to the plastid. Its subcellular location is the chloroplast. One of the primary rRNA binding proteins, it binds directly to 16S rRNA central domain where it helps coordinate assembly of the platform of the 30S subunit. The polypeptide is Small ribosomal subunit protein uS8c (rps8) (Platanus occidentalis (Sycamore)).